We begin with the raw amino-acid sequence, 66 residues long: Large ribosomal subunit protein bL31 (66 aa).

Zn(2+) contacts are provided by cysteine 16, cysteine 18, cysteine 36, and cysteine 39.

The protein belongs to the bacterial ribosomal protein bL31 family. Type A subfamily. As to quaternary structure, part of the 50S ribosomal subunit. Zn(2+) serves as cofactor.

Its function is as follows. Binds the 23S rRNA. The chain is Large ribosomal subunit protein bL31 from Pelobacter propionicus (strain DSM 2379 / NBRC 103807 / OttBd1).